We begin with the raw amino-acid sequence, 269 residues long: Type II methyltransferase M2.LlaDCHI (269 aa).

Belongs to the N(4)/N(6)-methyltransferase family.

It catalyses the reaction a 2'-deoxyadenosine in DNA + S-adenosyl-L-methionine = an N(6)-methyl-2'-deoxyadenosine in DNA + S-adenosyl-L-homocysteine + H(+). Its function is as follows. A beta subtype methylase, recognizes the double-stranded sequence 5'-GATC-3', methylates A-2 on both strands, and protects the DNA from cleavage by the LlaDCHI endonuclease. This is Type II methyltransferase M2.LlaDCHI from Lactococcus lactis subsp. cremoris (Streptococcus cremoris).